We begin with the raw amino-acid sequence, 38 residues long: Cytochrome b6-f complex subunit 5 (38 aa).

The helical transmembrane segment at 5-25 (LLCGIVLGLIPVTLLGLFVAA) threads the bilayer.

It belongs to the PetG family. As to quaternary structure, the 4 large subunits of the cytochrome b6-f complex are cytochrome b6, subunit IV (17 kDa polypeptide, PetD), cytochrome f and the Rieske protein, while the 4 small subunits are PetG, PetL, PetM and PetN. The complex functions as a dimer.

It is found in the cellular thylakoid membrane. Component of the cytochrome b6-f complex, which mediates electron transfer between photosystem II (PSII) and photosystem I (PSI), cyclic electron flow around PSI, and state transitions. PetG is required for either the stability or assembly of the cytochrome b6-f complex. This Parasynechococcus marenigrum (strain WH8102) protein is Cytochrome b6-f complex subunit 5.